Here is a 411-residue protein sequence, read N- to C-terminus: 6-hydroxytryprostatin B O-methyltransferase (411 aa).

Aspartate 270 provides a ligand contact to S-adenosyl-L-methionine. The active-site Proton acceptor is histidine 313.

The protein belongs to the class I-like SAM-binding methyltransferase superfamily. Cation-independent O-methyltransferase family. As to quaternary structure, homodimer.

The enzyme catalyses 6-hydroxytryprostatin B + S-adenosyl-L-methionine = tryprostatin A + S-adenosyl-L-homocysteine + H(+). Its pathway is alkaloid biosynthesis. Functionally, 6-hydroxytryprostatin B O-methyltransferase; part of the gene cluster that mediates the biosynthesis of fumitremorgins, indole alkaloids that carry not only intriguing chemical structures, but also interesting biological and pharmacological activities. The biosynthesis of fumitremorgin-type alkaloids begins by condensation of the two amino acids L-tryptophan and L-proline to brevianamide F, catalyzed by the non-ribosomal peptide synthetase ftmPS/ftmA. Brevianamide F is then prenylated by the prenyltransferase ftmPT1/ftmB in the presence of dimethylallyl diphosphate, resulting in the formation of tryprostatin B. The three cytochrome P450 monooxygenases, ftmP450-1/ftmC, ftmP450-2/ftmE and ftmP450-3/FtmG, are responsible for the conversion of tryprostatin B to 6-hydroxytryprostatin B, tryprostatin A to fumitremorgin C and fumitremorgin C to 12,13-dihydroxyfumitremorgin C, respectively. The putative methyltransferase ftmMT/ftmD is expected for the conversion of 6-hydroxytryprostatin B to tryprostatin A. FtmPT2/FtmH catalyzes the prenylation of 12,13-dihydroxyfumitre-morgin C in the presence of dimethylallyl diphosphate, resulting in the formation of fumitremorgin B. Fumitremorgin B is further converted to verruculogen by ftmOx1/ftmF via the insertion of an endoperoxide bond between the two prenyl moieties. Finally, verruculogen is further converted to fumitremorgin A by the verruculogen prenyltransferase ftmPT3. The sequence is that of 6-hydroxytryprostatin B O-methyltransferase from Neosartorya fischeri (strain ATCC 1020 / DSM 3700 / CBS 544.65 / FGSC A1164 / JCM 1740 / NRRL 181 / WB 181) (Aspergillus fischerianus).